A 1730-amino-acid polypeptide reads, in one-letter code: SH3 and multiple ankyrin repeat domains protein 3 (1730 aa).

Residues 1 to 75 (MDGPGASAVV…KFLDEERLLQ (75 aa)) are intramolecular interaction with the ANK repeats. Position 122 is a phosphotyrosine (Y122). ANK repeat units follow at residues 148-178 (SGEC…HLDF), 182-211 (DGLT…SPDY), 215-245 (RGLT…QLGT), 249-278 (NGWQ…NMGA), 282-311 (SGNT…NKDV), and 315-345 (NSQT…DVVP). Residues 354-466 (KRRRLAGPSG…PPPRGPKRKL (113 aa)) form a disordered region. 4 positions are modified to phosphoserine: S373, S375, S387, and S394. Positions 404 to 415 (LQEEKDRDRDGE) are enriched in basic and acidic residues. A compositionally biased stretch (pro residues) spans 444-460 (APGPGPASPAPPAPPPR). In terms of domain architecture, SH3 spans 470 to 529 (VPGRKFIAVKAHSPQGEGEIPLHRGEAVKVLSIGEGGFWEGTVKGRTGWFPADCVEEVQM). Phosphoserine is present on S482. Residue Y555 is modified to Phosphotyrosine. In terms of domain architecture, PDZ spans 570 to 664 (VAILQKRDHE…RLVMKVVSVT (95 aa)). Residues 664–688 (TRKPEEDGARRRAPPPPKRAPSTTL) are disordered. The interval 677–684 (PPPPKRAP) is required for interaction with ABI1. Residues S694, S781, S790, and S801 each carry the phosphoserine modification. 2 disordered regions span residues 760-1460 (QGLP…AAGP) and 1475-1524 (GDPV…SLLD). Residues 812 to 844 (IPPPPQTAPPPPPAPYYFDSGPPPTFSPPPPPG) are compositionally biased toward pro residues. Positions 857–869 (GLEARLGAGAAGL) are enriched in low complexity. Residues S890 and S897 each carry the phosphoserine modification. Position 912 is a phosphothreonine (T912). Y930 carries the post-translational modification Phosphotyrosine. The residue at position 965 (R965) is an Asymmetric dimethylarginine. S995 bears the Phosphoserine mark. A compositionally biased stretch (basic and acidic residues) spans 1016-1026 (VKERRLEERRR). A compositionally biased stretch (low complexity) spans 1078 to 1092 (LKPLVGGPSLGPSGS). Residues 1122 to 1131 (SQTPSRSPTP) show a composition bias toward polar residues. Position 1130 is a phosphothreonine (T1130). Phosphoserine occurs at positions 1134, 1159, 1163, and 1166. Basic and acidic residues predominate over residues 1174 to 1194 (ARREAEKPPREERKSPEDKKS). The residue at position 1234 (T1234) is a Phosphothreonine. The span at 1235-1250 (PELAPAPMQAAAVAEP) shows a compositional bias: low complexity. Composition is skewed to pro residues over residues 1251–1261 (MPSPRAQPPGS) and 1321–1333 (TPPP…PTTV). S1253 carries the post-translational modification Phosphoserine. The span at 1360-1370 (ADTRSSSDPHL) shows a compositional bias: basic and acidic residues. Low complexity predominate over residues 1371–1392 (ETTSTISTVSSMSTLSSESGEL). The SH3-binding signature appears at 1410-1416 (PPVPPKP). S1420 bears the Phosphoserine mark. Residues 1494–1514 (ISELSSRLQQLNKDTRSLGEE) are a coiled coil. Over residues 1495 to 1505 (SELSSRLQQLN) the composition is skewed to polar residues. Residues S1510, S1521, S1529, and S1539 each carry the phosphoserine modification. Disordered stretches follow at residues 1546–1584 (ISAQ…PASL) and 1627–1663 (VRSV…QQKP). A compositionally biased stretch (low complexity) spans 1627 to 1637 (VRSVSARSRSP). S1634, S1636, and S1638 each carry phosphoserine. Residues 1638–1648 (SPSPLPSPSPG) are compositionally biased toward pro residues. Positions 1649–1658 (SGPSAGPRRP) are enriched in low complexity. The SAM domain maps to 1667–1730 (WSKFDVGDWL…ERALRQLDGS (64 aa)).

It belongs to the SHANK family. As to quaternary structure, may homomultimerize via its SAM domain. Interacts with BAIAP2, DBNL and SLC17A7/VGLUT1. Interacts with DLGAP1/GKAP, GRM1/MGLUR1, GRM5/MGLUR5 and LZTS3 C-termini via its PDZ domain. Interacts with ABI1, HOMER1, HOMER2, HOMER3 and CTTN/cortactin SH3 domain. Is part of a complex with DLG4/PSD-95 and DLGAP1/GKAP. Interacts (via PDZ domain) with the GRIA1 subunit of the AMPA receptor (via PDZ-binding motif). Interacts with WASF1 and CYFIP2; the interactions mediate the association of SHANK3 with the WAVE1 complex. Interacts with ARPC2; the interaction probably mediates the association of SHANK3 with the Arp2/3 complex. Interacts (via ANK repeats) with SHARPIN and SPTAN1. Interacts (via PDZ domain) with ARHGAP44 (probably via PDZ-binding motif); the interaction takes place in dendritic spines and promotes GRIA1 exocytosis. Interacts with CAMK2A. Interacts with DIP2A. Interacts with ADGRL3. As to expression, in brain, highly expressed in striatum, thalamus, hippocampus and granule cells of the cerebellum.

It localises to the cytoplasm. Its subcellular location is the synapse. The protein resides in the postsynaptic density. It is found in the cell projection. The protein localises to the dendritic spine. Its function is as follows. Major scaffold postsynaptic density protein which interacts with multiple proteins and complexes to orchestrate the dendritic spine and synapse formation, maturation and maintenance. Interconnects receptors of the postsynaptic membrane including NMDA-type and metabotropic glutamate receptors via complexes with GKAP/PSD-95 and HOMER, respectively, and the actin-based cytoskeleton. Plays a role in the structural and functional organization of the dendritic spine and synaptic junction through the interaction with Arp2/3 and WAVE1 complex as well as the promotion of the F-actin clusters. By way of this control of actin dynamics, participates in the regulation of developing neurons growth cone motility and the NMDA receptor-signaling. Also modulates GRIA1 exocytosis and GRM5/MGLUR5 expression and signaling to control the AMPA and metabotropic glutamate receptor-mediated synaptic transmission and plasticity. May be required at an early stage of synapse formation and be inhibited by IGF1 to promote synapse maturation. This Mus musculus (Mouse) protein is SH3 and multiple ankyrin repeat domains protein 3 (Shank3).